Consider the following 395-residue polypeptide: MNFILAVFAIILLQAVRGEIDNAIVGDPSVECGDDFFEVNIYHSCSCVGNFIIKVKFDTRTTFHGLAFVQNHLDNPDCRSFASKTDSAKNSSLRLTFDQCAIEKRHSTSPRGLFLSTNVVVAFNPEFLTKNDRVFKVQCFYMEMERRIQKVIQISMPPPTMHSKQLNMPVCKYEVLDGSPTGPPVYFATVGQMVYHKWTCDTEHENTFCMLVHSCFVDDGNGQRVQLLNDKGCALDKYLLTNLEYPTDLMAGREAHVYKYADRDNMYFDCQISITVKEPGLDYCDVPSCPDPPRRRRSNTLPAPDDNITAIAAHIEYEDSEIISDYIIPNDDIISLNWLQRNFDMRISELCMTAIGTTLLVFLNAFLFIISLVSIVHVCCFRTSPKLEKTKSTML.

Residues 1–18 (MNFILAVFAIILLQAVRG) form the signal peptide. Residues 19–358 (EIDNAIVGDP…ELCMTAIGTT (340 aa)) are Extracellular-facing. Residues 46 to 291 (SCVGNFIIKV…DYCDVPSCPD (246 aa)) enclose the ZP domain. Asparagine 90 and asparagine 307 each carry an N-linked (GlcNAc...) asparagine glycan. The chain crosses the membrane as a helical span at residues 359–379 (LLVFLNAFLFIISLVSIVHVC). The Cytoplasmic portion of the chain corresponds to 380–395 (CFRTSPKLEKTKSTML).

The protein localises to the cell membrane. Its function is as follows. Plays a role in alae formation in L1 and dauer stage larvae. The chain is Cuticlin-5 from Caenorhabditis elegans.